We begin with the raw amino-acid sequence, 346 residues long: Ion-translocating oxidoreductase complex subunit D (346 aa).

Helical transmembrane passes span 20 to 40 (IMIQ…TFFG), 42 to 62 (GIII…GVVL), 69 to 91 (LASR…SLPP), and 120 to 140 (PFNP…VQMT). At Thr187 the chain carries FMN phosphoryl threonine. The next 5 membrane-spanning stretches (helical) occupy residues 212–232 (ASAG…YLIW), 242–262 (LSLL…APVV), 264–284 (APPL…FIAT), 290–310 (AATV…VWLI), and 314–334 (GGYP…VPLI).

Belongs to the NqrB/RnfD family. As to quaternary structure, the complex is composed of six subunits: RnfA, RnfB, RnfC, RnfD, RnfE and RnfG. Requires FMN as cofactor.

Its subcellular location is the cell inner membrane. Its function is as follows. Part of a membrane-bound complex that couples electron transfer with translocation of ions across the membrane. The chain is Ion-translocating oxidoreductase complex subunit D from Sodalis glossinidius (strain morsitans).